Consider the following 551-residue polypeptide: Glucose-6-phosphate isomerase (551 aa).

Catalysis depends on E356, which acts as the Proton donor. Active-site residues include H387 and K515.

It belongs to the GPI family.

It localises to the cytoplasm. It catalyses the reaction alpha-D-glucose 6-phosphate = beta-D-fructose 6-phosphate. It functions in the pathway carbohydrate biosynthesis; gluconeogenesis. The protein operates within carbohydrate degradation; glycolysis; D-glyceraldehyde 3-phosphate and glycerone phosphate from D-glucose: step 2/4. Catalyzes the reversible isomerization of glucose-6-phosphate to fructose-6-phosphate. This Blochmanniella pennsylvanica (strain BPEN) protein is Glucose-6-phosphate isomerase.